The sequence spans 61 residues: Large ribosomal subunit protein uL29 (61 aa).

This sequence belongs to the universal ribosomal protein uL29 family.

The chain is Large ribosomal subunit protein uL29 from Campylobacter curvus (strain 525.92).